The chain runs to 216 residues: Histidine biosynthesis bifunctional protein HisIE (216 aa).

The tract at residues methionine 1–threonine 127 is phosphoribosyl-AMP cyclohydrolase. The interval leucine 128–arginine 216 is phosphoribosyl-ATP pyrophosphohydrolase.

The protein in the N-terminal section; belongs to the PRA-CH family. This sequence in the C-terminal section; belongs to the PRA-PH family.

The protein localises to the cytoplasm. The enzyme catalyses 1-(5-phospho-beta-D-ribosyl)-ATP + H2O = 1-(5-phospho-beta-D-ribosyl)-5'-AMP + diphosphate + H(+). The catalysed reaction is 1-(5-phospho-beta-D-ribosyl)-5'-AMP + H2O = 1-(5-phospho-beta-D-ribosyl)-5-[(5-phospho-beta-D-ribosylamino)methylideneamino]imidazole-4-carboxamide. It participates in amino-acid biosynthesis; L-histidine biosynthesis; L-histidine from 5-phospho-alpha-D-ribose 1-diphosphate: step 2/9. It functions in the pathway amino-acid biosynthesis; L-histidine biosynthesis; L-histidine from 5-phospho-alpha-D-ribose 1-diphosphate: step 3/9. This Nostoc sp. (strain PCC 7120 / SAG 25.82 / UTEX 2576) protein is Histidine biosynthesis bifunctional protein HisIE (hisI).